We begin with the raw amino-acid sequence, 554 residues long: Endochitinase (554 aa).

The first 19 residues, 1–19 (MRATLATLAVLALATAVQS), serve as a signal peptide directing secretion. The region spanning 23 to 398 (ARIVCYFSNW…KILHKHMSSY (376 aa)) is the GH18 domain. C27 and C52 are joined by a disulfide. 76–77 (LD) provides a ligand contact to chitin. Residue N85 is glycosylated (N-linked (GlcNAc...) asparagine). 103–106 (GGWA) lines the chitin pocket. Residue E146 is the Proton donor of the active site. Residues Y147 and 213-216 (MSYD) each bind chitin. N-linked (GlcNAc...) asparagine glycosylation occurs at N303. Residue W370 participates in chitin binding. A disordered region spans residues 398–494 (YTVPPPHTEN…VPPTENEVDG (97 aa)). The span at 431–457 (PTTTTAKPASTTKTTVKTTTTTTAKPP) shows a compositional bias: low complexity. Positions 467–477 (INVRPEPKPEP) are enriched in basic and acidic residues. Positions 495–553 (SEICNSDQDYIPDKKHCDKYWRCVNGEAMQFSCQHGTVFNVELNVCDWPSNATRRECQQ) constitute a Chitin-binding type-2 domain. The cysteines at positions 527 and 540 are disulfide-linked. N545 carries N-linked (GlcNAc...) asparagine glycosylation.

This sequence belongs to the glycosyl hydrolase 18 family. Chitinase class II subfamily. In terms of tissue distribution, epidermis and gut.

Its subcellular location is the secreted. The catalysed reaction is Random endo-hydrolysis of N-acetyl-beta-D-glucosaminide (1-&gt;4)-beta-linkages in chitin and chitodextrins.. Digests chitin in the exoskeleton during the molting process. This is Endochitinase from Manduca sexta (Tobacco hawkmoth).